Consider the following 162-residue polypeptide: MSSARFESKILSRAELVAAVAAGRLPRPLVFTNGVFDILHRGHVTYLDQAAQLGATLVVAVNTDESVRRLGKGSDRPLNQVQDRAALLAALGCVDAVTSFHEDTPQELIGELRPDLIVKGGDYDMDTLPETALVKSWGGRAVAIPFDFERSTTALLGKIRQG.

It catalyses the reaction D-glycero-beta-D-manno-heptose 1-phosphate + ATP + H(+) = ADP-D-glycero-beta-D-manno-heptose + diphosphate. Its pathway is nucleotide-sugar biosynthesis; ADP-L-glycero-beta-D-manno-heptose biosynthesis; ADP-L-glycero-beta-D-manno-heptose from D-glycero-beta-D-manno-heptose 7-phosphate: step 3/4. It participates in bacterial outer membrane biogenesis; LPS core biosynthesis. Catalyzes the ADP transfer from ATP to D-glycero-beta-D-manno-heptose 1-phosphate, yielding ADP-D-glycero-beta-D-manno-heptose. Cannot use GTP, UTP, or CTP as substrate. Is not active against the alpha-anomer substrate. Is also able to catalyze the ADP transfer to beta-glucose 1-phosphate in vitro, yielding ADP-beta-glucose. This is D-beta-D-heptose 1-phosphate adenylyltransferase from Bordetella bronchiseptica (strain ATCC BAA-588 / NCTC 13252 / RB50) (Alcaligenes bronchisepticus).